A 40-amino-acid chain; its full sequence is Subtilisin-like serine protease AS-E1 (40 aa).

The 37-residue stretch at 4-40 (PWGLARISHRTTGATSYVYDDSAGEGTCSYIIDTGIY) folds into the Peptidase S8 domain. The active-site Charge relay system is aspartate 36.

Belongs to the peptidase S8 family. As to quaternary structure, homodimer.

Its activity is regulated as follows. Strongly inhibited by antipain and PMSF. Inhibited by benzamidine and aprotinin by 80% and 17% respectively. Little or no inhibition by EDTA, E-64, iodoacetic acid, leupeptin and FUT-175. Subtilisin-like serine protease. Cleaves prothrombin at 155-Arg-|-Ser-156, 45-Thr-|-Ala-46 and 316-Tyr-|-Ile-317 to produce meizothrombin(desF1)-like molecules. Degrades fibrinogen. Inhibits plasma coagulation. The chain is Subtilisin-like serine protease AS-E1 from Acremonium sp.